Here is a 522-residue protein sequence, read N- to C-terminus: Protein RCC2 (522 aa).

Residues 1-83 (MPRKKAAAAA…TAGKAGGAAV (83 aa)) form a disordered region. S16 carries the post-translational modification Phosphoserine. T20 is subject to Phosphothreonine. The segment covering 24–36 (GPRKRGGPAGRKR) has biased composition (basic residues). S43, S44, S45, S46, S50, and S51 each carry phosphoserine. Residues 71–82 (RPATAGKAGGAA) are compositionally biased toward low complexity. Residues K92 and K124 each carry the N6-acetyllysine modification. RCC1 repeat units lie at residues 103–165 (KGQL…SLLI), 168–219 (EGKL…ALTE), 221–271 (GSVF…IMDC), 273–347 (GNLY…VLDS), 348–401 (QKRV…AVSE), 403–447 (GGLF…VAAD), and 448–501 (ESTI…VIAR). K293 bears the N6-acetyllysine mark. The segment at 318–325 (KTKDGQIL) is required for interaction with RAC1. T342 is subject to Phosphothreonine. Position 377 is an N6-acetyllysine (K377). A compositionally biased stretch (basic and acidic residues) spans 502–515 (DESETEKEKIKKLP). The interval 502–522 (DESETEKEKIKKLPEYNPRTL) is disordered.

Interacts with RAC1. Interacts with nucleotide-free and with GDP and GTP-bound forms of RAC1, with a slight preference for GDP-bound RAC1. Binds preferentially to the nucleotide-free form of RAC1. Interacts with CORO1C. Interacts with microtubules.

It localises to the nucleus. It is found in the nucleolus. Its subcellular location is the cytoplasm. The protein resides in the cytoskeleton. The protein localises to the chromosome. It localises to the centromere. It is found in the spindle. Its subcellular location is the midbody. The protein resides in the cell membrane. Its function is as follows. Multifunctional protein that may affect its functions by regulating the activity of small GTPases, such as RAC1 and RALA. Required for normal progress through the cell cycle, both during interphase and during mitosis. Required for the presence of normal levels of MAD2L1, AURKB and BIRC5 on inner centromeres during mitosis, and for normal attachment of kinetochores to mitotic spindles. Required for normal organization of the microtubule cytoskeleton in interphase cells. Functions as guanine nucleotide exchange factor (GEF) for RALA. Interferes with the activation of RAC1 by guanine nucleotide exchange factors. Prevents accumulation of active, GTP-bound RAC1, and suppresses RAC1-mediated reorganization of the actin cytoskeleton and formation of membrane protrusions. Required for normal cellular responses to contacts with the extracellular matrix of adjacent cells, and for directional cell migration in response to a fibronectin gradient (in vitro). This chain is Protein RCC2 (RCC2), found in Homo sapiens (Human).